Reading from the N-terminus, the 280-residue chain is Digeranylgeranylglyceryl phosphate synthase (280 aa).

9 helical membrane-spanning segments follow: residues 4-24 (AAYL…AGIL), 27-47 (IIAT…VLTI), 83-103 (LMYA…FTPL), 104-124 (PLAG…SFLK), 128-148 (LIGN…GGAI), 150-170 (GTQG…VMLA), 199-219 (ATIY…LLLY), 222-242 (WGAF…FGAI), and 260-280 (KILK…AVLL).

It belongs to the UbiA prenyltransferase family. DGGGP synthase subfamily. Mg(2+) is required as a cofactor.

It is found in the cell membrane. The catalysed reaction is sn-3-O-(geranylgeranyl)glycerol 1-phosphate + (2E,6E,10E)-geranylgeranyl diphosphate = 2,3-bis-O-(geranylgeranyl)-sn-glycerol 1-phosphate + diphosphate. The protein operates within membrane lipid metabolism; glycerophospholipid metabolism. In terms of biological role, prenyltransferase that catalyzes the transfer of the geranylgeranyl moiety of geranylgeranyl diphosphate (GGPP) to the C2 hydroxyl of (S)-3-O-geranylgeranylglyceryl phosphate (GGGP). This reaction is the second ether-bond-formation step in the biosynthesis of archaeal membrane lipids. This chain is Digeranylgeranylglyceryl phosphate synthase, found in Methanospirillum hungatei JF-1 (strain ATCC 27890 / DSM 864 / NBRC 100397 / JF-1).